The primary structure comprises 537 residues: Putative cysteine ligase BshC (537 aa).

Positions 422 to 450 form a coiled coil; sequence IEKVEGMIEQQRRLNQDLLDEVAGNQNNI.

This sequence belongs to the BshC family.

Functionally, involved in bacillithiol (BSH) biosynthesis. May catalyze the last step of the pathway, the addition of cysteine to glucosamine malate (GlcN-Mal) to generate BSH. The sequence is that of Putative cysteine ligase BshC from Staphylococcus aureus (strain bovine RF122 / ET3-1).